The chain runs to 465 residues: Argininosuccinate lyase (465 aa).

This sequence belongs to the lyase 1 family. Argininosuccinate lyase subfamily.

The protein resides in the cytoplasm. The enzyme catalyses 2-(N(omega)-L-arginino)succinate = fumarate + L-arginine. It participates in amino-acid biosynthesis; L-arginine biosynthesis; L-arginine from L-ornithine and carbamoyl phosphate: step 3/3. The sequence is that of Argininosuccinate lyase from Rhodopseudomonas palustris (strain ATCC BAA-98 / CGA009).